The primary structure comprises 271 residues: MAFKFKTFAAVGALIGSLALVGCGQDEKDPNHIKVGVIVGAEQQVAEVAQKVAKDKYGLDVELVTFNDYVLPNEALSKGDIDANAFQHKPYLDQQLKDRGYKLVAVGNTFVYPIAGYSKKIKSLDELQDGSQVAVPNDPTNLGRSLLLLQKVGLIKLKDGVGLLPTVLDVVENPKNLKIVELEAPQLPRSLDDAQIALAVINTTYASQIGLTPAKDGIFVEDKESPYVNLIVTREDNKDAENVKKFVQAYQSDEVYEAANKVFNGGAVKGW.

The N-terminal stretch at 1-22 is a signal peptide; that stretch reads MAFKFKTFAAVGALIGSLALVG. A lipid anchor (N-palmitoyl cysteine) is attached at Cys-23. Cys-23 is lipidated: S-diacylglycerol cysteine.

This sequence belongs to the NlpA lipoprotein family.

It localises to the cell membrane. Functionally, this protein is a component of a D-methionine permease, a binding protein-dependent, ATP-driven transport system. This Escherichia coli (strain K12) protein is D-methionine-binding lipoprotein MetQ (metQ).